Consider the following 147-residue polypeptide: D-aminoacyl-tRNA deacylase (147 aa).

The Gly-cisPro motif, important for rejection of L-amino acids motif lies at 137–138 (GP).

This sequence belongs to the DTD family. In terms of assembly, homodimer.

It localises to the cytoplasm. It carries out the reaction glycyl-tRNA(Ala) + H2O = tRNA(Ala) + glycine + H(+). The enzyme catalyses a D-aminoacyl-tRNA + H2O = a tRNA + a D-alpha-amino acid + H(+). An aminoacyl-tRNA editing enzyme that deacylates mischarged D-aminoacyl-tRNAs. Also deacylates mischarged glycyl-tRNA(Ala), protecting cells against glycine mischarging by AlaRS. Acts via tRNA-based rather than protein-based catalysis; rejects L-amino acids rather than detecting D-amino acids in the active site. By recycling D-aminoacyl-tRNA to D-amino acids and free tRNA molecules, this enzyme counteracts the toxicity associated with the formation of D-aminoacyl-tRNA entities in vivo and helps enforce protein L-homochirality. This chain is D-aminoacyl-tRNA deacylase, found in Exiguobacterium sp. (strain ATCC BAA-1283 / AT1b).